The sequence spans 364 residues: Probable endopolygalacturonase B (364 aa).

Positions 1–20 (MHFFQSSLVAATMGAALVAA) are cleaved as a signal peptide. Residues 21–29 (APAADLETR) constitute a propeptide that is removed on maturation. A disulfide bridge links cysteine 32 with cysteine 47. Residues asparagine 138 and asparagine 141 are each glycosylated (N-linked (GlcNAc...) asparagine). PbH1 repeat units follow at residues 159-188 (SDHLTIKDVLLDNSAGTKLGHNTDAFDVGS), 189-210 (STYITIDGATVYNQDDCLAVNS), 211-231 (GEHITFTNGYCNGGHGLSIGS), 240-261 (VNDVTISNSQVINSQNGARIKT), 269-291 (VTGVKFQDISLKGITKYGIVVQQ), and 303-324 (TNGVKVSDITFEKVTGTVTSSA). The Proton donor role is filled by aspartate 203. An intrachain disulfide couples cysteine 205 to cysteine 221. Histidine 225 is an active-site residue. Cysteines 331 and 336 form a disulfide. N-linked (GlcNAc...) asparagine glycosylation occurs at asparagine 338. Cysteine 355 and cysteine 364 are disulfide-bonded.

It belongs to the glycosyl hydrolase 28 family.

It localises to the secreted. The enzyme catalyses (1,4-alpha-D-galacturonosyl)n+m + H2O = (1,4-alpha-D-galacturonosyl)n + (1,4-alpha-D-galacturonosyl)m.. Its function is as follows. Involved in maceration and soft-rotting of plant tissue. Hydrolyzes the 1,4-alpha glycosidic bonds of de-esterified pectate in the smooth region of the plant cell wall. This chain is Probable endopolygalacturonase B (pgaB), found in Aspergillus fumigatus (strain ATCC MYA-4609 / CBS 101355 / FGSC A1100 / Af293) (Neosartorya fumigata).